The chain runs to 602 residues: MEKEVIAYLDNETIIDSQSVKNTNLKEIYFDNSKESLEVIRHSCAHLMAQAIKSLYPEAKFFVGPVIEDGFYYDFRVESKIGEEDLVKIEKKMKELAEAKIEISKYEITKSEALAKFQNDDLKQEVLLRIPDGAVSIYKQGEFEDLCRGPHAPNTKFLRFFKLTRVAGAYLGGDEKREMLTRIYGTAFADKESLKEYLTIIEEAKKRDHRKLGTELKLFTFDDEIGGGLPIWLSNGARLRSKLEHMLYKIHRLRGYEPVRGPELLKADAWKISGHYANYKENMYFTQIDEQEYGIKPMNCVGHIKIYQSDVRSYRDLPLKFFEYGVVHRHEKSGVLHGLFRVREFTQDDAHIFCMPSQIKEQVLEILAFVDNLMKLFDFSYEMEISTKPEKAIGDDEIWEIATKALKEALNEQGLKYGIDEGGGAFYGPKIDIKITDALKRKWQCGTVQVDFNLPSRFKLEYTDSDNEKKQPVMLHRAILGSFERFIGILTEHCAGEFPFFIAPTAVGIVPIGEAHIAYAKEIQKELLELNIDSEVYEKNESLSKKIRIAEKQKLPMILVLGDDEVVKRSVALRDRRAKEQKNLSLDEFIKLVKEKMSEVHF.

The interval 208-499 is catalytic; it reads DHRKLGTELK…LTEHCAGEFP (292 aa). 3 residues coordinate Zn(2+): cysteine 300, histidine 351, and histidine 476.

It belongs to the class-II aminoacyl-tRNA synthetase family. As to quaternary structure, homodimer. Zn(2+) is required as a cofactor.

Its subcellular location is the cytoplasm. The catalysed reaction is tRNA(Thr) + L-threonine + ATP = L-threonyl-tRNA(Thr) + AMP + diphosphate + H(+). In terms of biological role, catalyzes the attachment of threonine to tRNA(Thr) in a two-step reaction: L-threonine is first activated by ATP to form Thr-AMP and then transferred to the acceptor end of tRNA(Thr). Also edits incorrectly charged L-seryl-tRNA(Thr). The sequence is that of Threonine--tRNA ligase from Campylobacter jejuni subsp. jejuni serotype O:23/36 (strain 81-176).